The primary structure comprises 68 residues: DNA-directed RNA polymerase subunit omega (68 aa).

This sequence belongs to the RNA polymerase subunit omega family. As to quaternary structure, the RNAP catalytic core consists of 2 alpha, 1 beta, 1 beta' and 1 omega subunit. When a sigma factor is associated with the core the holoenzyme is formed, which can initiate transcription.

The catalysed reaction is RNA(n) + a ribonucleoside 5'-triphosphate = RNA(n+1) + diphosphate. In terms of biological role, promotes RNA polymerase assembly. Latches the N- and C-terminal regions of the beta' subunit thereby facilitating its interaction with the beta and alpha subunits. This is DNA-directed RNA polymerase subunit omega from Dechloromonas aromatica (strain RCB).